Here is a 124-residue protein sequence, read N- to C-terminus: Probable glycine cleavage system H protein (124 aa).

The region spanning 22–104 is the Lipoyl-binding domain; it reads TGRVGISEFA…FGDGWLVEID (83 aa). N6-lipoyllysine is present on lysine 63.

This sequence belongs to the GcvH family. In terms of assembly, the glycine cleavage system is composed of four proteins: P, T, L and H. Requires (R)-lipoate as cofactor.

The glycine cleavage system catalyzes the degradation of glycine. The H protein shuttles the methylamine group of glycine from the P protein to the T protein. This Halobacterium salinarum (strain ATCC 700922 / JCM 11081 / NRC-1) (Halobacterium halobium) protein is Probable glycine cleavage system H protein.